The primary structure comprises 23 residues: Protein male-specific 40 (23 aa).

As to expression, during early embryogenesis expression is initially detected at the early cleavage stages in the nucleus of two discrete cells. Subsequently, expression is abundant in the cytoplasm of the newly formed pole cells. Male-specific expression during the third larval instar.

It localises to the cytoplasm. Its subcellular location is the nucleus. The polypeptide is Protein male-specific 40 (Drosophila melanogaster (Fruit fly)).